Consider the following 322-residue polypeptide: Apolipoprotein E (322 aa).

Residues 1–18 (MKVLWAALLVAFLAGCQG) form the signal peptide. 8 repeat units span residues 84-105 (ALMD…EQLS), 106-127 (PVAE…ARLG), 128-149 (ADME…AMLG), 150-171 (QSXD…KRLL), 172-193 (RDVD…EGAE), 194-215 (RGVS…ARAA), 216-238 (TVGS…ERLR), and 239-260 (ARME…EQVE). The interval 84–260 (ALMDETMKEL…RLDEVKEQVE (177 aa)) is 8 X 22 AA approximate tandem repeats. M147 is subject to Methionine sulfoxide. S151 is modified (phosphoserine). The tract at residues 162–172 (HLRKLRKRLLR) is LDL and other lipoprotein receptors binding. Residue 166–169 (LRKR) coordinates heparin. The segment at 214 to 295 (AATVGSSLAG…SWFEPLVEDM (82 aa)) is lipid-binding and lipoprotein association. O-linked (GalNAc...) threonine glycosylation is present at T216. 234-241 (GERLRARM) provides a ligand contact to heparin. The segment at 271–322 (QQMRLQAEAFQARLKSWFEPLVEDMQRQWAGLVEKVQAAVGASAAPVPGDNH) is homooligomerization. The specificity for association with VLDL stretch occupies residues 283–295 (RLKSWFEPLVEDM).

Belongs to the apolipoprotein A1/A4/E family. Homotetramer. May interact with ABCA1; functionally associated with ABCA1 in the biogenesis of HDLs. May interact with APP/A4 amyloid-beta peptide; the interaction is extremely stable in vitro but its physiological significance is unclear. May interact with MAPT. May interact with MAP2. In the cerebrospinal fluid, interacts with secreted SORL1. Interacts with PMEL; this allows the loading of PMEL luminal fragment on ILVs to induce fibril nucleation. In terms of processing, APOE exists as multiple glycosylated and sialylated glycoforms within cells and in plasma. The extent of glycosylation and sialylation are tissue and context specific. Glycated in plasma VLDL. Post-translationally, phosphorylated by FAM20C in the extracellular medium.

It is found in the secreted. The protein localises to the extracellular space. It localises to the extracellular matrix. The protein resides in the extracellular vesicle. Its subcellular location is the endosome. It is found in the multivesicular body. Its function is as follows. APOE is an apolipoprotein, a protein associating with lipid particles, that mainly functions in lipoprotein-mediated lipid transport between organs via the plasma and interstitial fluids. APOE is a core component of plasma lipoproteins and is involved in their production, conversion and clearance. Apolipoproteins are amphipathic molecules that interact both with lipids of the lipoprotein particle core and the aqueous environment of the plasma. As such, APOE associates with chylomicrons, chylomicron remnants, very low density lipoproteins (VLDL) and intermediate density lipoproteins (IDL) but shows a preferential binding to high-density lipoproteins (HDL). It also binds a wide range of cellular receptors including the LDL receptor/LDLR, the LDL receptor-related proteins LRP1, LRP2 and LRP8 and the very low-density lipoprotein receptor/VLDLR that mediate the cellular uptake of the APOE-containing lipoprotein particles. Finally, APOE also has a heparin-binding activity and binds heparan-sulfate proteoglycans on the surface of cells, a property that supports the capture and the receptor-mediated uptake of APOE-containing lipoproteins by cells. A main function of APOE is to mediate lipoprotein clearance through the uptake of chylomicrons, VLDLs, and HDLs by hepatocytes. APOE is also involved in the biosynthesis by the liver of VLDLs as well as their uptake by peripheral tissues ensuring the delivery of triglycerides and energy storage in muscle, heart and adipose tissues. By participating in the lipoprotein-mediated distribution of lipids among tissues, APOE plays a critical role in plasma and tissues lipid homeostasis. APOE is also involved in two steps of reverse cholesterol transport, the HDLs-mediated transport of cholesterol from peripheral tissues to the liver, and thereby plays an important role in cholesterol homeostasis. First, it is functionally associated with ABCA1 in the biogenesis of HDLs in tissues. Second, it is enriched in circulating HDLs and mediates their uptake by hepatocytes. APOE also plays an important role in lipid transport in the central nervous system, regulating neuron survival and sprouting. This Ateles geoffroyi (Black-handed spider monkey) protein is Apolipoprotein E (APOE).